The sequence spans 456 residues: Anthocyanidin 3-O-glucosyltransferase UFGT (456 aa).

Serine 18 contributes to the kaempferol binding site. Position 18 (serine 18) interacts with quercetin. Threonine 19 serves as a coordination point for UDP. Residue threonine 19 participates in UDP-alpha-D-glucose binding. Histidine 20 and glutamine 84 together coordinate kaempferol. Histidine 20 (proton acceptor) is an active-site residue. Position 84 (glutamine 84) interacts with quercetin. Aspartate 119 (charge relay) is an active-site residue. Threonine 141 is a UDP-alpha-D-glucose binding site. Kaempferol contacts are provided by histidine 150 and glutamine 188. The quercetin site is built by histidine 150 and glutamine 188. Residues threonine 280, serine 306, tryptophan 332, alanine 333, and histidine 350 each coordinate UDP. Positions 280, 306, 332, 333, 350, 353, 354, 355, and 358 each coordinate UDP-alpha-D-glucose. Residues asparagine 354, serine 355, and glutamate 358 each contribute to the UDP site. Glycine 373 lines the quercetin pocket. UDP-alpha-D-glucose is bound by residues aspartate 374 and glutamine 375.

Belongs to the UDP-glycosyltransferase family. Detected only in berry skin.

The enzyme catalyses an anthocyanidin + UDP-alpha-D-glucose + H(+) = an anthocyanidin 3-O-beta-D-glucoside + UDP. It carries out the reaction cyanidin + UDP-alpha-D-glucose = cyanidin 3-O-beta-D-glucoside + UDP + H(+). It catalyses the reaction delphinidin + UDP-alpha-D-glucose = delphinidin 3-O-beta-D-glucoside + UDP. The catalysed reaction is peonidin + UDP-alpha-D-glucose = peonidin 3-O-beta-D-glucoside + UDP. The enzyme catalyses pelargonidin + UDP-alpha-D-glucose = pelargonidin 3-O-beta-D-glucoside + UDP. It carries out the reaction malvidin + UDP-alpha-D-glucose = malvidin 3-O-beta-D-glucoside + UDP. It catalyses the reaction a flavonol + UDP-alpha-D-glucose = a flavonol 3-O-beta-D-glucoside + UDP + H(+). Its pathway is pigment biosynthesis; anthocyanin biosynthesis. Inhibited by Mn(2+) and Zn(2+). Functionally, in the presence of other necessary color factors, this glycosylation reaction allows the accumulation of anthocyanin pigments. Involved in the formation of red wine pigments. UDP-glucose (UDP-Glc) is the physiological sugar donor, and cyanidin is the natural acceptor in vivo. Can glucosylate the anthocyanidins delphinidin, peonidin, pelargonidin and malvidin. The flavonols quercitin and kaempferol can also be glucosylated in vitro, but with glucosylation rates 50-100 times lower than cyanidin. In vitro, can use UDP-Glc, UDP-5SGlc, UDP-Xyl, UDP-Man, UDP-Gal, UDP-GlcNAc, GDP-Glc, dTDP-Glc and dTDP-Xyl as sugar donors, but not UDP-6OMeGal, UDP-Ara, UDP-6FGal, UDP-GlcN, UDP-2FGal, UDP-5SAra, GDP-Man, GDP-Fuc, UDP-Fuc or UDP-Rha. This chain is Anthocyanidin 3-O-glucosyltransferase UFGT, found in Vitis vinifera (Grape).